We begin with the raw amino-acid sequence, 487 residues long: MNAMNDKWYSGMARTEDWWAVWLGLIMFMASVSSLWGWELTGWMAKPDTWVWEKFSIEGVLKSSGKPEWHPALSLLVTYLVFTALTCLAAWSMKFDLKQFFIGWTILFIMTWVIWIIGNEAHFKASVYEMDKYGLSWGLSLGSGFSYLLALLVGLVIGNFFKNTARFLNEAAKPEWFIKTAIVFLGIKIGVMSIEAAGFITELVMTGVAATFVAYMLFWPIVYALGRRVFHLSRDAAAVLSSGISICGISAAIATAGAIRARPALPAFVSILVVIFAMFELIILPGFYTAIAPEQPIVNGSALGLTVKTDGADAAAGAMLDELMRANAEANLGIVWKEGWILMASLTTKIWIDMFIGVWAFVLALVWVYKVERKPGQSKIGLMEIWHRFPKFVLGYLLVWFSYIMLASSGSEAAETLHKAAAAVEGPMRNMMFMLTFISIGIITDFSKLKGMGKLALLYAIALFGIIAPIAYGVAWIFHRGMMPPVL.

A run of 11 helical transmembrane segments spans residues 19-38, 71-93, 100-119, 139-161, 181-200, 204-226, 269-291, 350-369, 389-411, 426-443, and 456-478; these read WAVW…LWGW, PALS…AWSM, FFIG…IIGN, LSLG…GNFF, AIVF…AGFI, VMTG…YALG, VSIL…YTAI, IWID…VWVY, FPKF…SSGS, GPMR…IGII, and ALLY…AWIF.

This sequence belongs to the UPF0324 family.

The protein localises to the cell membrane. The chain is UPF0324 membrane protein NE0724 from Nitrosomonas europaea (strain ATCC 19718 / CIP 103999 / KCTC 2705 / NBRC 14298).